Reading from the N-terminus, the 245-residue chain is Probable inactive carboxylesterase Os04g0669700 (245 aa).

Catalysis depends on charge relay system residues S115 and H201.

It belongs to the AB hydrolase superfamily. AB hydrolase 2 family.

This chain is Probable inactive carboxylesterase Os04g0669700, found in Oryza sativa subsp. japonica (Rice).